We begin with the raw amino-acid sequence, 323 residues long: Aldo-keto reductase family 1 member C3 (323 aa).

Residues 23-24 (TY) and D50 contribute to the NADP(+) site. Y55 serves as the catalytic Proton donor. H117 is a binding site for substrate. NADP(+) contacts are provided by residues 166–167 (SN), Q190, 216–222 (YSALGSQ), 270–272 (KSY), and 276–280 (RIRQN).

Belongs to the aldo/keto reductase family. As to expression, expressed in many tissues including adrenal gland, brain, kidney, liver, lung, mammary gland, placenta, small intestine, colon, spleen, prostate and testis. High expression in prostate and mammary gland. In the prostate, higher levels in epithelial cells than in stromal cells. In the brain, expressed in medulla, spinal cord, frontotemporal lobes, thalamus, subthalamic nuclei and amygdala. Weaker expression in the hippocampus, substantia nigra and caudate.

It is found in the cytoplasm. The enzyme catalyses a 3alpha-hydroxysteroid + NADP(+) = a 3-oxosteroid + NADPH + H(+). It catalyses the reaction a 3alpha-hydroxysteroid + NAD(+) = a 3-oxosteroid + NADH + H(+). The catalysed reaction is prostaglandin F2alpha + NADP(+) = prostaglandin D2 + NADPH + H(+). It carries out the reaction prostaglandin F2alpha + NADP(+) = prostaglandin H2 + NADPH + H(+). The enzyme catalyses prostaglandin D2 + NADPH + H(+) = 11beta-prostaglandin F2 + NADP(+). It catalyses the reaction prostaglandin D2-ethanolamide + NADPH + H(+) = 11beta-prostaglandin F2-ethanolamide + NADP(+). The catalysed reaction is testosterone + NAD(+) = androst-4-ene-3,17-dione + NADH + H(+). It carries out the reaction testosterone + NADP(+) = androst-4-ene-3,17-dione + NADPH + H(+). The enzyme catalyses 17beta-estradiol + NADP(+) = estrone + NADPH + H(+). It catalyses the reaction 17beta-estradiol + NAD(+) = estrone + NADH + H(+). The catalysed reaction is (20S)-hydroxypregn-4-en-3-one + NADP(+) = progesterone + NADPH + H(+). It carries out the reaction (20S)-hydroxypregn-4-en-3-one + NAD(+) = progesterone + NADH + H(+). The enzyme catalyses 5alpha-androstane-3alpha,17beta-diol + NADP(+) = 17beta-hydroxy-5alpha-androstan-3-one + NADPH + H(+). It catalyses the reaction 5alpha-androstane-3alpha,17beta-diol + NAD(+) = 17beta-hydroxy-5alpha-androstan-3-one + NADH + H(+). The catalysed reaction is androsterone + NADPH + H(+) = 5alpha-androstane-3alpha,17beta-diol + NADP(+). It carries out the reaction 5alpha-androstane-3alpha,17beta-diol + NAD(+) = androsterone + NADH + H(+). The enzyme catalyses 5alpha-androstane-3beta,17beta-diol + NADP(+) = 17beta-hydroxy-5alpha-androstan-3-one + NADPH + H(+). It catalyses the reaction 9-cis-retinol + NADP(+) = 9-cis-retinal + NADPH + H(+). The protein operates within steroid metabolism. Its activity is regulated as follows. Strongly inhibited by nonsteroidal anti-inflammatory drugs (NSAID) including flufenamic acid and indomethacin. Also inhibited by the flavinoid, rutin, and by selective serotonin inhibitors (SSRIs). The oxidation reaction is inhibited by low micromolar concentrations of NADPH. Cytosolic aldo-keto reductase that catalyzes the NADH and NADPH-dependent reduction of ketosteroids to hydroxysteroids. Acts as a NAD(P)(H)-dependent 3-, 17- and 20-ketosteroid reductase on the steroid nucleus and side chain and regulates the metabolism of androgens, estrogens and progesterone. Displays the ability to catalyze both oxidation and reduction in vitro, but most probably acts as a reductase in vivo since the oxidase activity measured in vitro is inhibited by physiological concentration of NADPH. Acts preferentially as a 17-ketosteroid reductase and has the highest catalytic efficiency of the AKR1C enzyme for the reduction of delta4-androstenedione to form testosterone. Reduces prostaglandin (PG) D2 to 11beta-prostaglandin F2, progesterone to 20alpha-hydroxyprogesterone and estrone to 17beta-estradiol. Catalyzes the transformation of the potent androgen dihydrotestosterone (DHT) into the less active form, 5-alpha-androstan-3-alpha,17-beta-diol (3-alpha-diol). Also displays retinaldehyde reductase activity toward 9-cis-retinal. In Homo sapiens (Human), this protein is Aldo-keto reductase family 1 member C3 (AKR1C3).